The sequence spans 541 residues: Solute carrier family 2, facilitated glucose transporter member 10 (541 aa).

Residues 1 to 15 (MGHSPPVLPLCASVS) are Cytoplasmic-facing. Residues 16 to 36 (LLGGLTFGYELAVISGALLPL) traverse the membrane as a helical segment. Topologically, residues 37–48 (QLDFGLSCLEQE) are extracellular. A helical transmembrane segment spans residues 49–69 (FLVGSLLLGALLASLVGGFLI). Residues 70-77 (DCYGRKQA) lie on the Cytoplasmic side of the membrane. The chain crosses the membrane as a helical span at residues 78-98 (ILGSNLVLLAGSLTLGLAGSL). The Extracellular portion of the chain corresponds to 99–106 (AWLVLGRA). A helical transmembrane segment spans residues 107 to 127 (VVGFAISLSSMACCIYVSELV). The Cytoplasmic segment spans residues 128 to 134 (GPRQRGV). A helical membrane pass occupies residues 135 to 155 (LVSLYEAGITVGILLSYALNY). At 156 to 166 (ALAGTPWGWRH) the chain is on the extracellular side. The chain crosses the membrane as a helical span at residues 167-187 (MFGWATAPAVLQSLSLLFLPA). Over 188–233 (GTDETATHKDLIPLQGGEAPKLGPGRPRYSFLDLFRARDNMRGRTT) the chain is Cytoplasmic. The helical transmembrane segment at 234–254 (VGLGLVLFQQLTGQPNVLCYA) threads the bilayer. 242-243 (QQ) is a D-glucose binding site. Topologically, residues 255–269 (STIFSSVGFHGGSSA) are extracellular. Residues 270-290 (VLASVGLGAVKVAATLTAMGL) traverse the membrane as a helical segment. Over 291 to 298 (VDRAGRRA) the chain is Cytoplasmic. The helical transmembrane segment at 299 to 319 (LLLAGCALMALSVSGIGLVSF) threads the bilayer. Residues 320 to 414 (AVPMDSGPSC…HALLRWTALL (95 aa)) are Extracellular-facing. Asn-334 carries an N-linked (GlcNAc...) asparagine glycan. The disordered stretch occupies residues 340 to 388 (GLPGDSGLLQDSSLPPIPRTNEDQREPILSTAKKTKPHPRSGDPSAPPR). A helical transmembrane segment spans residues 415-435 (CLMVFVSAFSFGFGPVTWLVL). Trp-432 provides a ligand contact to D-glucose. At 436–445 (SEIYPVEIRG) the chain is on the cytoplasmic side. Residues 446 to 466 (RAFAFCNSFNWAANLFISLSF) form a helical membrane-spanning segment. Over 467 to 476 (LDLIGTIGLS) the chain is Extracellular. A helical membrane pass occupies residues 477–497 (WTFLLYGLTAVLGLGFIYLFV). Topologically, residues 498-541 (PETKGQSLAEIDQQFQKRRFTLSFGHRQNSTGIPYSRIEISAAS) are cytoplasmic.

The protein belongs to the major facilitator superfamily. Sugar transporter (TC 2.A.1.1) family. Glucose transporter subfamily. In terms of tissue distribution, widely expressed; highest levels in liver and pancreas.

The protein resides in the endomembrane system. It localises to the cytoplasm. It is found in the perinuclear region. The enzyme catalyses D-glucose(out) = D-glucose(in). Functionally, facilitative glucose transporter required for the development of the cardiovascular system. The protein is Solute carrier family 2, facilitated glucose transporter member 10 of Homo sapiens (Human).